The following is a 51-amino-acid chain: Cyclic phosphodiesterase (51 aa).

Catalysis depends on His-11, which acts as the Proton donor/acceptor. Position 13 (Thr-13) interacts with substrate. The active-site Proton donor/acceptor is the His-38. Positions 40 and 43 each coordinate substrate.

Belongs to the 2H phosphoesterase superfamily. CPD1 family.

In terms of biological role, hydrolyzes ADP-ribose 1'',2''-cyclic phosphate (Appr&gt;1) that is produced during tRNA splicing into ADP-ribose 1''-phosphate (Appr-1''p). The sequence is that of Cyclic phosphodiesterase from Triticum aestivum (Wheat).